A 101-amino-acid polypeptide reads, in one-letter code: Apolipoprotein C-II (101 aa).

The first 22 residues, 1–22 (MGTRFLLALFLVLLVLGFEVQG), serve as a signal peptide directing secretion. The tract at residues 66-74 (TVDEKLRDM) is lipid binding. A lipoprotein lipase cofactor region spans residues 78–101 (STAAMSTYAGILTDQVLSMLKGEE).

Belongs to the apolipoprotein C2 family. In terms of processing, proapolipoprotein C-II is synthesized as a sialic acid containing glycoprotein which is subsequently desialylated prior to its proteolytic processing. Proapolipoprotein C-II, the major form found in plasma undergoes proteolytic cleavage of its N-terminal hexapeptide to generate apolipoprotein C-II, which occurs as the minor form in plasma.

The protein localises to the secreted. Its function is as follows. Component of chylomicrons, very low-density lipoproteins (VLDL), low-density lipoproteins (LDL), and high-density lipoproteins (HDL) in plasma. Plays an important role in lipoprotein metabolism as an activator of lipoprotein lipase. Both proapolipoprotein C-II and apolipoprotein C-II can activate lipoprotein lipase. This chain is Apolipoprotein C-II (APOC2), found in Plecturocebus moloch (Dusky titi monkey).